The following is a 132-amino-acid chain: Ribosome-binding factor A (132 aa).

This sequence belongs to the RbfA family. Monomer. Binds 30S ribosomal subunits, but not 50S ribosomal subunits or 70S ribosomes.

It localises to the cytoplasm. In terms of biological role, one of several proteins that assist in the late maturation steps of the functional core of the 30S ribosomal subunit. Associates with free 30S ribosomal subunits (but not with 30S subunits that are part of 70S ribosomes or polysomes). Required for efficient processing of 16S rRNA. May interact with the 5'-terminal helix region of 16S rRNA. In Pasteurella multocida (strain Pm70), this protein is Ribosome-binding factor A.